Consider the following 304-residue polypeptide: Protein transport protein sec13 (304 aa).

6 WD repeats span residues glycine 12–valine 51, glycine 56–isoleucine 97, leucine 102–asparagine 143, alanine 147–lysine 203, glycine 211–tryptophan 253, and asparagine 259–asparagine 298.

This sequence belongs to the WD repeat SEC13 family. In terms of assembly, the COPII coat is composed of at least 5 proteins: the sec23/24 complex, the sec13/31 complex, and the protein vtr-7/sar1. Component of the nuclear pore complex (NPC). NPC constitutes the exclusive means of nucleocytoplasmic transport. NPCs allow the passive diffusion of ions and small molecules and the active, nuclear transport receptor-mediated bidirectional transport of macromolecules such as proteins, RNAs, ribonucleoparticles (RNPs), and ribosomal subunits across the nuclear envelope. Due to its 8-fold rotational symmetry, all subunits are present with 8 copies or multiples thereof.

The protein resides in the cytoplasmic vesicle. It localises to the COPII-coated vesicle membrane. Its subcellular location is the endoplasmic reticulum membrane. It is found in the nucleus. The protein localises to the nuclear pore complex. Functionally, component of the coat protein complex II (COPII) which promotes the formation of transport vesicles from the endoplasmic reticulum (ER). The coat has two main functions, the physical deformation of the endoplasmic reticulum membrane into vesicles and the selection of cargo molecules. It also functions as a component of the nuclear pore complex (NPC). NPC components, collectively referred to as nucleoporins (NUPs), can play the role of both NPC structural components and of docking or interaction partners for transiently associated nuclear transport factors. Nup-20/sec13 is required for efficient mRNA export from the nucleus to the cytoplasm and for correct nuclear pore biogenesis and distribution. The sequence is that of Protein transport protein sec13 (nup-20) from Neurospora crassa (strain ATCC 24698 / 74-OR23-1A / CBS 708.71 / DSM 1257 / FGSC 987).